The chain runs to 99 residues: MADGLELSAELSVHTGTVTHTIFVYVFLGKSKRLKTFSDSNVGSVIKLEAGFAVWSRCEAANGEWMEADNEDRCRLYQIYRESKLKEFARYNVLSRVNW.

Residues Glu-10–Gly-29 traverse the membrane as a helical segment.

It localises to the membrane. This is an uncharacterized protein from Schizosaccharomyces pombe (strain 972 / ATCC 24843) (Fission yeast).